We begin with the raw amino-acid sequence, 219 residues long: MDPEKFYSDAIDYWNGVQPTVDGMLGGLGTGRIPQTDVVGSRTFLNRLNYRIGKIENLVAADCGAGIGRVTENVLLKIASHVDLVEPVENFISTAKKQLATKPCSFINVGLQNWTPEKNRYGLIWNQWCLSHLTDEDLIAYLSRCCEAIQEKGVICVKENVSSFEDTFDPIDSSVTRCEQSLKSLFKKANLVVVAETLQHGFPEELFPVKMYALVPHSS.

Residues Gly64, Arg69, 111–112 (LQ), and Gln127 contribute to the S-adenosyl-L-methionine site.

This sequence belongs to the methyltransferase superfamily. NTM1 family.

It is found in the cytoplasm. The catalysed reaction is N-terminal L-alanyl-L-prolyl-L-lysyl-[protein] + 3 S-adenosyl-L-methionine = N-terminal N,N,N-trimethyl-L-alanyl-L-prolyl-L-lysyl-[protein] + 3 S-adenosyl-L-homocysteine + 3 H(+). It carries out the reaction N-terminal L-seryl-L-prolyl-L-lysyl-[protein] + 3 S-adenosyl-L-methionine = N-terminal N,N,N-trimethyl-L-seryl-L-prolyl-L-lysyl-[protein] + 3 S-adenosyl-L-homocysteine + 3 H(+). It catalyses the reaction N-terminal L-prolyl-L-prolyl-L-lysyl-[protein] + 2 S-adenosyl-L-methionine = N-terminal N,N-dimethyl-L-prolyl-L-prolyl-L-lysyl-[protein] + 2 S-adenosyl-L-homocysteine + 2 H(+). Functionally, alpha-N-methyltransferase that methylates the N-terminus of target proteins containing the N-terminal motif [Ala/Pro/Ser]-Pro-Lys when the initiator Met is cleaved. Specifically catalyzes mono-, di- or tri-methylation of exposed alpha-amino group of Ala or Ser residue in the [Ala/Ser]-Pro-Lys motif and mono- or di-methylation of Pro in the Pro-Pro-Lys motif. The chain is Alpha N-terminal protein methyltransferase 1 (tae1) from Schizosaccharomyces pombe (strain 972 / ATCC 24843) (Fission yeast).